Consider the following 924-residue polypeptide: Nodulation receptor kinase (924 aa).

Residues 1 to 29 form the signal peptide; sequence MMELRVICIIRLVVACVLCLCIFIRSASS. Residues 361–382 adopt a coiled-coil conformation; it reads EVIQKMRKELLLQNQDNEALES. LRR repeat units follow at residues 406 to 428, 430 to 452, 453 to 475, and 477 to 498; these read VITK…VTEM, KLQI…PPSS, LLIS…IISL, and HLNS…AKLN. A helical membrane pass occupies residues 520–540; it reads FMIGAITSGSILITLAVVILF. In terms of domain architecture, Protein kinase spans 595 to 872; the sequence is EKYKTLIGEG…IVRELEDALI (278 aa). Residues 601–609 and Lys-623 contribute to the ATP site; that span reads IGEGGFGSV. The active-site Proton acceptor is Asp-721.

This sequence belongs to the protein kinase superfamily. Ser/Thr protein kinase family. Post-translationally, may be phosphorylated.

Its subcellular location is the membrane. It carries out the reaction L-seryl-[protein] + ATP = O-phospho-L-seryl-[protein] + ADP + H(+). The catalysed reaction is L-threonyl-[protein] + ATP = O-phospho-L-threonyl-[protein] + ADP + H(+). Its function is as follows. Involved in the perception of symbiotic fungi and bacteria and required for the calcium spiking. Part of the perception/transduction system leading to nodulation or mycorrhizal infection. The chain is Nodulation receptor kinase (NORK) from Pisum sativum (Garden pea).